A 379-amino-acid chain; its full sequence is Homoserine O-succinyltransferase (379 aa).

The AB hydrolase-1 domain occupies 51–360; sequence NAVLICHALS…DSPYGHDAFL (310 aa). Residue Ser157 is the Nucleophile of the active site. Substrate is bound at residue Arg227. Catalysis depends on residues Asp323 and His356. Asp357 serves as a coordination point for substrate.

This sequence belongs to the AB hydrolase superfamily. MetX family. In terms of assembly, homodimer.

The protein localises to the cytoplasm. It catalyses the reaction L-homoserine + succinyl-CoA = O-succinyl-L-homoserine + CoA. It functions in the pathway amino-acid biosynthesis; L-methionine biosynthesis via de novo pathway; O-succinyl-L-homoserine from L-homoserine: step 1/1. Its activity is regulated as follows. Requires MetW for activity. In terms of biological role, transfers a succinyl group from succinyl-CoA to L-homoserine, forming succinyl-L-homoserine. The sequence is that of Homoserine O-succinyltransferase from Pseudomonas putida (strain ATCC 47054 / DSM 6125 / CFBP 8728 / NCIMB 11950 / KT2440).